A 320-amino-acid chain; its full sequence is Protein rlx (320 aa).

This protein is probably required for relaxation complex formation and plasmid mobilization by conjugative plasmids. This chain is Protein rlx (rlx), found in Staphylococcus aureus.